The primary structure comprises 185 residues: Putative lipoprotein LprB (185 aa).

Residues 1–24 (MRRKVRRLTLAVSALVALFPAVAG) form the signal peptide. Residue Cys-25 is the site of N-palmitoyl cysteine attachment. A lipid anchor (S-diacylglycerol cysteine) is attached at Cys-25. A disordered region spans residues 26–50 (SDSGDNKPGATIPSTPANAEGRHGP).

It is found in the cell membrane. The chain is Putative lipoprotein LprB (lprB) from Mycobacterium tuberculosis (strain CDC 1551 / Oshkosh).